The following is a 725-amino-acid chain: Fatty acid oxidation complex subunit alpha (725 aa).

The enoyl-CoA hydratase/isomerase stretch occupies residues 1 to 189 (MLYKGDTLYL…KIGLVDGVVK (189 aa)). Asp-296 is a binding site for substrate. The segment at 311-725 (ETPKQAAVLG…RLNQPVRLVL (415 aa)) is 3-hydroxyacyl-CoA dehydrogenase. NAD(+)-binding positions include Met-324, Asp-343, 400 to 402 (VVE), Lys-407, and Ser-429. His-450 functions as the For 3-hydroxyacyl-CoA dehydrogenase activity in the catalytic mechanism. Asn-453 serves as a coordination point for NAD(+). Positions 500 and 660 each coordinate substrate.

The protein in the N-terminal section; belongs to the enoyl-CoA hydratase/isomerase family. It in the C-terminal section; belongs to the 3-hydroxyacyl-CoA dehydrogenase family. In terms of assembly, heterotetramer of two alpha chains (FadB) and two beta chains (FadA).

It carries out the reaction a (3S)-3-hydroxyacyl-CoA + NAD(+) = a 3-oxoacyl-CoA + NADH + H(+). The enzyme catalyses a (3S)-3-hydroxyacyl-CoA = a (2E)-enoyl-CoA + H2O. The catalysed reaction is a 4-saturated-(3S)-3-hydroxyacyl-CoA = a (3E)-enoyl-CoA + H2O. It catalyses the reaction (3S)-3-hydroxybutanoyl-CoA = (3R)-3-hydroxybutanoyl-CoA. It carries out the reaction a (3Z)-enoyl-CoA = a 4-saturated (2E)-enoyl-CoA. The enzyme catalyses a (3E)-enoyl-CoA = a 4-saturated (2E)-enoyl-CoA. It functions in the pathway lipid metabolism; fatty acid beta-oxidation. Functionally, involved in the aerobic and anaerobic degradation of long-chain fatty acids via beta-oxidation cycle. Catalyzes the formation of 3-oxoacyl-CoA from enoyl-CoA via L-3-hydroxyacyl-CoA. It can also use D-3-hydroxyacyl-CoA and cis-3-enoyl-CoA as substrate. This chain is Fatty acid oxidation complex subunit alpha, found in Salmonella paratyphi A (strain ATCC 9150 / SARB42).